The chain runs to 219 residues: MDQLEMKKIAARAALQYVKPDTIVGVGSGSTVNCFIDALGEMAGDIKGAVAASKASEERLRALGIEVFSANEVTELDVYIDGADEITPQGYMIKGGGAALTREKIVSSLAKKFICIVDASKQVDVLGSTFALPVEVIPMARSYVARQLVALGGSPEYRESVVTDNGNVILDVYNFKIFEPLKMEHTINNIAGVVTNGIFAQRYANVTIVGTPDGAKIIE.

Residues 28-31, 81-84, and 94-97 each bind substrate; these read SGST, DGAD, and KGGG. Glu103 acts as the Proton acceptor in catalysis. Lys121 is a substrate binding site.

This sequence belongs to the ribose 5-phosphate isomerase family. Homodimer.

The enzyme catalyses aldehydo-D-ribose 5-phosphate = D-ribulose 5-phosphate. Its pathway is carbohydrate degradation; pentose phosphate pathway; D-ribose 5-phosphate from D-ribulose 5-phosphate (non-oxidative stage): step 1/1. Catalyzes the reversible conversion of ribose-5-phosphate to ribulose 5-phosphate. This is Ribose-5-phosphate isomerase A from Glaesserella parasuis serovar 5 (strain SH0165) (Haemophilus parasuis).